The primary structure comprises 1102 residues: Protein MMS22-like (1102 aa).

This sequence belongs to the MMS22 family. MMS22L subfamily.

It localises to the nucleus. The protein localises to the chromosome. Functionally, involved in recombination-dependent repair of stalled or collapsed replication forks. The sequence is that of Protein MMS22-like from Drosophila melanogaster (Fruit fly).